Consider the following 279-residue polypeptide: Acyl-[acyl-carrier-protein]--UDP-N-acetylglucosamine O-acyltransferase (279 aa).

The protein belongs to the transferase hexapeptide repeat family. LpxA subfamily. As to quaternary structure, homotrimer.

The protein localises to the cytoplasm. The catalysed reaction is a (3R)-hydroxyacyl-[ACP] + UDP-N-acetyl-alpha-D-glucosamine = a UDP-3-O-[(3R)-3-hydroxyacyl]-N-acetyl-alpha-D-glucosamine + holo-[ACP]. It participates in glycolipid biosynthesis; lipid IV(A) biosynthesis; lipid IV(A) from (3R)-3-hydroxytetradecanoyl-[acyl-carrier-protein] and UDP-N-acetyl-alpha-D-glucosamine: step 1/6. Its function is as follows. Involved in the biosynthesis of lipid A, a phosphorylated glycolipid that anchors the lipopolysaccharide to the outer membrane of the cell. This is Acyl-[acyl-carrier-protein]--UDP-N-acetylglucosamine O-acyltransferase from Mesorhizobium japonicum (strain LMG 29417 / CECT 9101 / MAFF 303099) (Mesorhizobium loti (strain MAFF 303099)).